The primary structure comprises 557 residues: Probable WRKY transcription factor 20 (557 aa).

Positions Met-1 to Gln-12 are enriched in basic and acidic residues. Disordered regions lie at residues Met-1–Ala-36 and Lys-76–Asn-215. Residues Ser-95–Gln-114 are compositionally biased toward polar residues. The span at Ser-151 to Ser-169 shows a compositional bias: low complexity. A compositionally biased stretch (polar residues) spans Ser-193 to Ser-207. The WRKY 1 DNA-binding region spans Thr-205–Pro-269. Zn(2+) is bound by residues Cys-236, Cys-241, His-264, and His-266. Residues Asp-257–Arg-348 are disordered. Residues Gln-282 to Gly-299 are compositionally biased toward basic and acidic residues. The segment covering Tyr-303–Asn-314 has biased composition (polar residues). Over residues Ser-321–Ser-332 the composition is skewed to low complexity. A DNA-binding region (WRKY 2) is located at residues Ser-375–Pro-440. Residues Cys-406, Cys-411, His-435, and His-437 each coordinate Zn(2+). Disordered regions lie at residues Gly-433–Asn-486 and Asn-520–Pro-557. A compositionally biased stretch (polar residues) spans Asn-520–Ile-536.

This sequence belongs to the WRKY group I family.

The protein localises to the nucleus. In terms of biological role, transcription factor. Interacts specifically with the W box (5'-(T)TGAC[CT]-3'), a frequently occurring elicitor-responsive cis-acting element. This chain is Probable WRKY transcription factor 20 (WRKY20), found in Arabidopsis thaliana (Mouse-ear cress).